A 478-amino-acid chain; its full sequence is Phenylalanine--tRNA ligase alpha subunit (478 aa).

Residues Thr-318, 357–359 (QLE), and Tyr-397 each bind L-phenylalanine. Position 399 (Glu-399) interacts with Mg(2+). Phe-422 is a binding site for L-phenylalanine.

It belongs to the class-II aminoacyl-tRNA synthetase family. Phe-tRNA synthetase alpha subunit type 2 subfamily. Tetramer of two alpha and two beta subunits. Requires Mg(2+) as cofactor.

It is found in the cytoplasm. The enzyme catalyses tRNA(Phe) + L-phenylalanine + ATP = L-phenylalanyl-tRNA(Phe) + AMP + diphosphate + H(+). This is Phenylalanine--tRNA ligase alpha subunit from Methanospirillum hungatei JF-1 (strain ATCC 27890 / DSM 864 / NBRC 100397 / JF-1).